Consider the following 437-residue polypeptide: uncharacterized protein (437 aa).

This is an uncharacterized protein from Rhodococcus erythropolis (Arthrobacter picolinophilus).